A 533-amino-acid polypeptide reads, in one-letter code: Glucose-6-phosphate isomerase (533 aa).

E322 functions as the Proton donor in the catalytic mechanism. Residues H351 and K455 contribute to the active site.

It belongs to the GPI family.

Its subcellular location is the cytoplasm. It carries out the reaction alpha-D-glucose 6-phosphate = beta-D-fructose 6-phosphate. Its pathway is carbohydrate biosynthesis; gluconeogenesis. The protein operates within carbohydrate degradation; glycolysis; D-glyceraldehyde 3-phosphate and glycerone phosphate from D-glucose: step 2/4. Functionally, catalyzes the reversible isomerization of glucose-6-phosphate to fructose-6-phosphate. The chain is Glucose-6-phosphate isomerase from Desulfitobacterium hafniense (strain Y51).